The primary structure comprises 270 residues: Small ribosomal subunit protein uS3 (270 aa).

In terms of domain architecture, KH type-2 spans 38–106 (IRQMLTRGME…QVQLNILEVK (69 aa)). The tract at residues 212–270 (EREAAQAAQRAAGPQRRERPGRRRRGGGGGGGQQQQQAEKATAQATEAAKAAKSGNEGS) is disordered. Composition is skewed to low complexity over residues 216–225 (AQAAQRAAGP) and 245–263 (QQQQ…AKAA).

It belongs to the universal ribosomal protein uS3 family. Part of the 30S ribosomal subunit. Forms a tight complex with proteins S10 and S14.

Its function is as follows. Binds the lower part of the 30S subunit head. Binds mRNA in the 70S ribosome, positioning it for translation. The protein is Small ribosomal subunit protein uS3 of Thermobifida fusca (strain YX).